The chain runs to 389 residues: MLLALAQWLQGDASFLRLFTYLTFRAVMATITALGIGLVCGPWVIRKLTEMKVGQAVRKDGPQTHLVKSGTPTMGGVLILIGIAVATLLWGDLTNRFIWIVMLVTFGFGVIGWVDDYRKVVYKDPRGMSSREKYFWQSVIGLFAAVYLAFSVSEANNVRVFDLFMAWVRSGLSMGLPARADLMLPFLKSISYPLGVWGFIALTYFVIVGASNAVNLTDGLDGLVIMPVVLVGASLGVFAYVMGSAVYSKYLLFPHIPGAGELLIFCSAMGGAGLAFLWYNTHPAQVFMGDVGALALGGALGTVAVIVRQEIVLFIMGGIFVAETLSVMLQVTWFKYTKKRYGEGRRIFKMAPLHHHFELSGWKETQVVVRFWIITLMLCLFGLSTLKLR.

Transmembrane regions (helical) follow at residues R25–I45, T73–L93, F97–Y117, F135–A155, I190–A210, G222–M242, G258–W278, V286–I306, I311–V331, and Q366–L386.

This sequence belongs to the glycosyltransferase 4 family. MraY subfamily. It depends on Mg(2+) as a cofactor.

Its subcellular location is the cell inner membrane. The enzyme catalyses UDP-N-acetyl-alpha-D-muramoyl-L-alanyl-gamma-D-glutamyl-meso-2,6-diaminopimeloyl-D-alanyl-D-alanine + di-trans,octa-cis-undecaprenyl phosphate = di-trans,octa-cis-undecaprenyl diphospho-N-acetyl-alpha-D-muramoyl-L-alanyl-D-glutamyl-meso-2,6-diaminopimeloyl-D-alanyl-D-alanine + UMP. The protein operates within cell wall biogenesis; peptidoglycan biosynthesis. Functionally, catalyzes the initial step of the lipid cycle reactions in the biosynthesis of the cell wall peptidoglycan: transfers peptidoglycan precursor phospho-MurNAc-pentapeptide from UDP-MurNAc-pentapeptide onto the lipid carrier undecaprenyl phosphate, yielding undecaprenyl-pyrophosphoryl-MurNAc-pentapeptide, known as lipid I. The protein is Phospho-N-acetylmuramoyl-pentapeptide-transferase of Burkholderia multivorans (strain ATCC 17616 / 249).